The following is a 505-amino-acid chain: Maturase K (505 aa).

It belongs to the intron maturase 2 family. MatK subfamily.

The protein resides in the plastid. It is found in the chloroplast. In terms of biological role, usually encoded in the trnK tRNA gene intron. Probably assists in splicing its own and other chloroplast group II introns. The polypeptide is Maturase K (Kunzea capitata (Pink kunzea)).